Here is a 152-residue protein sequence, read N- to C-terminus: Ribosome maturation factor RimP (152 aa).

This sequence belongs to the RimP family.

The protein localises to the cytoplasm. In terms of biological role, required for maturation of 30S ribosomal subunits. This chain is Ribosome maturation factor RimP, found in Pseudoalteromonas atlantica (strain T6c / ATCC BAA-1087).